A 41-amino-acid polypeptide reads, in one-letter code: Photosystem I reaction center subunit IX (41 aa).

Residues 7 to 27 (YLSTAPVLLTIWLTFTAGFII) form a helical membrane-spanning segment.

It belongs to the PsaJ family.

The protein localises to the plastid. The protein resides in the chloroplast thylakoid membrane. Functionally, may help in the organization of the PsaE and PsaF subunits. The sequence is that of Photosystem I reaction center subunit IX from Phaeodactylum tricornutum (strain CCAP 1055/1).